Consider the following 944-residue polypeptide: LPS-assembly protein LptD (944 aa).

The signal sequence occupies residues 1–33 (MALKSPAFRRKFPLLVTGGLLALQPLATSFVVA). Residues 52 to 102 (KATGNLPPRPVHPGAAAASSGAEAPGEVGEAQAEKPMLVTESKGRGLKSRS) form a disordered region. Positions 64–82 (PGAAAASSGAEAPGEVGEA) are enriched in low complexity.

It belongs to the LptD family. Component of the lipopolysaccharide transport and assembly complex. Interacts with LptE and LptA.

It localises to the cell outer membrane. Functionally, together with LptE, is involved in the assembly of lipopolysaccharide (LPS) at the surface of the outer membrane. This is LPS-assembly protein LptD from Pseudomonas entomophila (strain L48).